Consider the following 283-residue polypeptide: Acetyl-coenzyme A carboxylase carboxyl transferase subunit beta (283 aa).

One can recognise a CoA carboxyltransferase N-terminal domain in the interval 29-283; sequence LWISCPKCQQ…VKIHSMKGAF (255 aa). Cysteine 33, cysteine 36, cysteine 51, and cysteine 54 together coordinate Zn(2+). The segment at 33–54 adopts a C4-type zinc-finger fold; sequence CPKCQQSIYHKDLGKYKTCPNC.

It belongs to the AccD/PCCB family. In terms of assembly, acetyl-CoA carboxylase is a heterohexamer composed of biotin carboxyl carrier protein (AccB), biotin carboxylase (AccC) and two subunits each of ACCase subunit alpha (AccA) and ACCase subunit beta (AccD). Requires Zn(2+) as cofactor.

The protein localises to the cytoplasm. It carries out the reaction N(6)-carboxybiotinyl-L-lysyl-[protein] + acetyl-CoA = N(6)-biotinyl-L-lysyl-[protein] + malonyl-CoA. It functions in the pathway lipid metabolism; malonyl-CoA biosynthesis; malonyl-CoA from acetyl-CoA: step 1/1. Functionally, component of the acetyl coenzyme A carboxylase (ACC) complex. Biotin carboxylase (BC) catalyzes the carboxylation of biotin on its carrier protein (BCCP) and then the CO(2) group is transferred by the transcarboxylase to acetyl-CoA to form malonyl-CoA. This is Acetyl-coenzyme A carboxylase carboxyl transferase subunit beta from Ligilactobacillus salivarius (strain UCC118) (Lactobacillus salivarius).